Consider the following 364-residue polypeptide: DNA replication and repair protein RecF (364 aa).

30–37 contacts ATP; it reads GNNAQGKT.

It belongs to the RecF family.

It is found in the cytoplasm. Functionally, the RecF protein is involved in DNA metabolism; it is required for DNA replication and normal SOS inducibility. RecF binds preferentially to single-stranded, linear DNA. It also seems to bind ATP. The chain is DNA replication and repair protein RecF from Clostridium botulinum (strain Okra / Type B1).